Here is a 222-residue protein sequence, read N- to C-terminus: Superoxide dismutase [Mn], mitochondrial (222 aa).

The N-terminal 24 residues, 1–24 (MLSRAVCGTSRQLAPVLGYLGSRQ), are a transit peptide targeting the mitochondrion. Residue H50 coordinates Mn(2+). Y58 bears the 3'-nitrotyrosine mark. Residues K68 and K75 each carry the N6-acetyllysine; alternate modification. N6-succinyllysine; alternate is present on residues K68 and K75. H98 lines the Mn(2+) pocket. An N6-acetyllysine modification is found at K114. N6-acetyllysine; alternate occurs at positions 122 and 130. 2 positions are modified to N6-succinyllysine; alternate: K122 and K130. 2 residues coordinate Mn(2+): D183 and H187. Position 202 is an N6-acetyllysine (K202).

This sequence belongs to the iron/manganese superoxide dismutase family. Homotetramer. The cofactor is Mn(2+). Post-translationally, nitrated under oxidative stress. Nitration coupled with oxidation inhibits the catalytic activity. In terms of processing, acetylation at Lys-122 decreases enzymatic activity. Deacetylated by SIRT3 upon exposure to ionizing radiations or after long fasting. Polyubiquitinated; leading to proteasomal degradation. Deubiquitinated by USP36 which increases protein stability.

Its subcellular location is the mitochondrion matrix. The catalysed reaction is 2 superoxide + 2 H(+) = H2O2 + O2. Functionally, destroys superoxide anion radicals which are normally produced within the cells and which are toxic to biological systems. The polypeptide is Superoxide dismutase [Mn], mitochondrial (SOD2) (Homo sapiens (Human)).